A 329-amino-acid polypeptide reads, in one-letter code: Flotillin-like protein FloA (329 aa).

2 helical membrane passes run 6 to 26 (FIVI…FVPI) and 27 to 47 (GLWI…LVGM).

This sequence belongs to the flotillin-like FloA family. As to quaternary structure, homooligomerizes.

Its subcellular location is the cell membrane. The protein localises to the membrane raft. Found in functional membrane microdomains (FMM) that may be equivalent to eukaryotic membrane rafts. FMMs are highly dynamic and increase in number as cells age. Flotillins are thought to be important factors in membrane fluidity. This chain is Flotillin-like protein FloA, found in Staphylococcus aureus (strain JH1).